A 145-amino-acid chain; its full sequence is Mannitol-specific phosphotransferase enzyme IIA component (145 aa).

A PTS EIIA type-2 domain is found at 4 to 144 (PILKKENIVL…EEILSILNEV (141 aa)). Catalysis depends on His64, which acts as the Tele-phosphohistidine intermediate. Position 64 is a phosphohistidine; by HPr (His64).

It is found in the cytoplasm. Functionally, the phosphoenolpyruvate-dependent sugar phosphotransferase system (sugar PTS), a major carbohydrate active transport system, catalyzes the phosphorylation of incoming sugar substrates concomitantly with their translocation across the cell membrane. The enzyme II CmtAB PTS system is involved in D-mannitol transport. In Geobacillus stearothermophilus (Bacillus stearothermophilus), this protein is Mannitol-specific phosphotransferase enzyme IIA component.